A 425-amino-acid chain; its full sequence is Inhibin beta A chain (425 aa).

The first 20 residues, 1–20 (MPLLWLRGFLLASCWIIVRS), serve as a signal peptide directing secretion. Positions 21–309 (SPTPGSEGHS…EDHPHRRRRR (289 aa)) are excised as a propeptide. N-linked (GlcNAc...) asparagine glycosylation is present at Asn165. Residues 259-289 (KKKKKEEEGEGKKRDGEGGAGGDEEKEQSHR) are disordered. The segment covering 263–275 (KEEEGEGKKRDGE) has biased composition (basic and acidic residues). Intrachain disulfides connect Cys313–Cys321, Cys320–Cys390, Cys349–Cys422, and Cys353–Cys424.

This sequence belongs to the TGF-beta family. As to quaternary structure, dimeric, linked by one or more disulfide bonds. Inhibin A is a dimer of alpha/INHA and beta-A/INHBA. Activin A is a homodimer of beta-A/INHBA. Activin AB is a dimer of beta-A/INHBA and beta-B/INHBB. Interacts with FST and FSTL3; these interactions prevent activin A interaction to its type II receptor. Activin A interacts with ACVR2A. Activin A interacts with BMPR2. Inhibin A interacts with ACVR1; this interaction creates a non-signaling complex (NSC) that inhibits ACVR1-mediated BMP signaling. Inhibin A interacts with ACVR2A.

The protein resides in the secreted. Inhibins/activins are involved in regulating a number of diverse functions such as hypothalamic and pituitary hormone secretion, gonadal hormone secretion, germ cell development and maturation, erythroid differentiation, insulin secretion, nerve cell survival, embryonic axial development or bone growth, depending on their subunit composition. In terms of biological role, activin A is a homodimer of INHBA that plays a role in several essential biological processes including embryonic development, stem cell maintenance and differentiation, haematopoiesis, cell proliferation and tissue fibrosis. Signals through type I (such as ACVR1B or ACVR1C) and type II receptors (such as ACVR2A, ACVR2B or BMPR2) which, upon ligand binding, phosphorylate SMAD2 and SMAD3 intracellular signaling mediators that form a complex with SMAD4, translocate to the nucleus and modulate gene expression. Can also activate alternative non-canonical intracellular signaling pathways including the p38 MAPK, extracellular signal-regulated kinases 1/2 (ERK1/2) and c-Jun N-terminal kinases (JNKs) to modulate cell migration and differentiation. Alternatively, promotes osteoblastic differentiation via ACVRL1-SMAD1/5/9 pathway. In addition, can engage the type I receptor ACVR1 to form an ACVR1-activin A-type II receptor non-signaling complex (NSC) that renders receptors unavailable for engagement with BMPs, hence resulting in an apparent inhibition of ACVR1-mediated BMP signaling. Functionally, inhibin A is a dimer of alpha/INHA and beta-A/INHBA that functions as a feedback regulator in the hypothalamic-pituitary-gonadal (HPG) axis. Inhibits the secretion of FSH from the anterior pituitary gland by acting on pituitary gonadotrope cells. Antagonizes activin A by binding to the proteoglycan, betaglycan, and forming a stable complex with and, thereby, sequestering type II activin receptors while excluding type I receptor. This chain is Inhibin beta A chain (INHBA), found in Bos taurus (Bovine).